A 234-amino-acid polypeptide reads, in one-letter code: Large ribosomal subunit protein uL1 (234 aa).

The protein belongs to the universal ribosomal protein uL1 family. In terms of assembly, part of the 50S ribosomal subunit.

Functionally, binds directly to 23S rRNA. The L1 stalk is quite mobile in the ribosome, and is involved in E site tRNA release. Its function is as follows. Protein L1 is also a translational repressor protein, it controls the translation of the L11 operon by binding to its mRNA. This is Large ribosomal subunit protein uL1 from Baumannia cicadellinicola subsp. Homalodisca coagulata.